The following is a 231-amino-acid chain: ATP phosphoribosyltransferase (231 aa).

The protein belongs to the ATP phosphoribosyltransferase family. Short subfamily. Heteromultimer composed of HisG and HisZ subunits.

Its subcellular location is the cytoplasm. The enzyme catalyses 1-(5-phospho-beta-D-ribosyl)-ATP + diphosphate = 5-phospho-alpha-D-ribose 1-diphosphate + ATP. The protein operates within amino-acid biosynthesis; L-histidine biosynthesis; L-histidine from 5-phospho-alpha-D-ribose 1-diphosphate: step 1/9. Its function is as follows. Catalyzes the condensation of ATP and 5-phosphoribose 1-diphosphate to form N'-(5'-phosphoribosyl)-ATP (PR-ATP). Has a crucial role in the pathway because the rate of histidine biosynthesis seems to be controlled primarily by regulation of HisG enzymatic activity. This is ATP phosphoribosyltransferase from Sinorhizobium medicae (strain WSM419) (Ensifer medicae).